The following is a 385-amino-acid chain: Probable protein phosphatase 2C 38 (385 aa).

The region spanning 46–357 (VAGEFSMSVI…DDITVIVVFL (312 aa)) is the PPM-type phosphatase domain. Ser77 carries the post-translational modification Phosphoserine. Mn(2+) contacts are provided by Asp88, Gly89, Asp289, and Asp348.

Belongs to the PP2C family. As to quaternary structure, interacts with BIK1. Mg(2+) is required as a cofactor. Mn(2+) serves as cofactor. In terms of processing, phosphorylation at Ser-77 induces dissociation of PP2C38 from BIK1.

It is found in the cell membrane. The catalysed reaction is O-phospho-L-seryl-[protein] + H2O = L-seryl-[protein] + phosphate. It catalyses the reaction O-phospho-L-threonyl-[protein] + H2O = L-threonyl-[protein] + phosphate. Functionally, may dephosphorylate and repress plasma membrane H(+)-ATPases (PM H(+)-ATPases, e.g. AHA1 and AHA2), thus influencing negatively plant growth and fitness. Involved in pathogen-associated molecular pattern (PAMP)-triggered immunity (PTI) signaling. Negatively regulates immune responses by controlling the phosphorylation and activation status of BIK1, a central rate-limiting kinase in PTI signaling. Impairs the phosphorylation of the NADPH oxidase RBOHD by BIK1. The chain is Probable protein phosphatase 2C 38 from Arabidopsis thaliana (Mouse-ear cress).